The primary structure comprises 725 residues: Phosphoribosylformylglycinamidine synthase subunit PurL (725 aa).

His-42 is a catalytic residue. Tyr-45 and Lys-84 together coordinate ATP. A Mg(2+)-binding site is contributed by Glu-86. Substrate contacts are provided by residues 87-90 (SHNH) and Arg-109. His-88 (proton acceptor) is an active-site residue. Asp-110 is a binding site for Mg(2+). Gln-237 provides a ligand contact to substrate. Asp-265 is a binding site for Mg(2+). 309 to 311 (ESQ) is a binding site for substrate. Asp-491 and Gly-528 together coordinate ATP. Asn-529 lines the Mg(2+) pocket. Ser-531 contributes to the substrate binding site.

The protein belongs to the FGAMS family. As to quaternary structure, monomer. Part of the FGAM synthase complex composed of 1 PurL, 1 PurQ and 2 PurS subunits.

Its subcellular location is the cytoplasm. The enzyme catalyses N(2)-formyl-N(1)-(5-phospho-beta-D-ribosyl)glycinamide + L-glutamine + ATP + H2O = 2-formamido-N(1)-(5-O-phospho-beta-D-ribosyl)acetamidine + L-glutamate + ADP + phosphate + H(+). Its pathway is purine metabolism; IMP biosynthesis via de novo pathway; 5-amino-1-(5-phospho-D-ribosyl)imidazole from N(2)-formyl-N(1)-(5-phospho-D-ribosyl)glycinamide: step 1/2. Functionally, part of the phosphoribosylformylglycinamidine synthase complex involved in the purines biosynthetic pathway. Catalyzes the ATP-dependent conversion of formylglycinamide ribonucleotide (FGAR) and glutamine to yield formylglycinamidine ribonucleotide (FGAM) and glutamate. The FGAM synthase complex is composed of three subunits. PurQ produces an ammonia molecule by converting glutamine to glutamate. PurL transfers the ammonia molecule to FGAR to form FGAM in an ATP-dependent manner. PurS interacts with PurQ and PurL and is thought to assist in the transfer of the ammonia molecule from PurQ to PurL. This chain is Phosphoribosylformylglycinamidine synthase subunit PurL, found in Campylobacter lari (strain RM2100 / D67 / ATCC BAA-1060).